A 354-amino-acid polypeptide reads, in one-letter code: Ribosomal RNA large subunit methyltransferase M (354 aa).

S-adenosyl-L-methionine contacts are provided by residues S183, 216 to 219 (SPGG), D235, D255, and D271. K300 functions as the Proton acceptor in the catalytic mechanism.

It belongs to the class I-like SAM-binding methyltransferase superfamily. RNA methyltransferase RlmE family. RlmM subfamily. Monomer.

It is found in the cytoplasm. The catalysed reaction is cytidine(2498) in 23S rRNA + S-adenosyl-L-methionine = 2'-O-methylcytidine(2498) in 23S rRNA + S-adenosyl-L-homocysteine + H(+). Its function is as follows. Catalyzes the 2'-O-methylation at nucleotide C2498 in 23S rRNA. This chain is Ribosomal RNA large subunit methyltransferase M, found in Pseudomonas putida (strain GB-1).